Here is a 147-residue protein sequence, read N- to C-terminus: UPF0310 protein in gntR 5'region (147 aa).

The protein belongs to the UPF0310 family.

The chain is UPF0310 protein in gntR 5'region (oug) from Bacillus licheniformis.